Reading from the N-terminus, the 189-residue chain is UPF0301 protein CF0373 (189 aa).

This sequence belongs to the UPF0301 (AlgH) family.

This Chlamydia felis (strain Fe/C-56) (Chlamydophila felis) protein is UPF0301 protein CF0373.